The following is a 763-amino-acid chain: Endothelin-converting enzyme 2 (763 aa).

The Cytoplasmic segment spans residues 1–60 (MNVALHELGGGGSMVEYKRAKLRDEESPEITVEGRATRDSLEVGFQKRTRQLFGSHTQLE). At serine 27 the chain carries Phosphoserine. Residues 61–81 (LVLAGLILVLAALLLGCLVAL) form a helical; Signal-anchor for type II membrane protein membrane-spanning segment. At 82–763 (WVHRDPAHST…MNPGQLCEVW (682 aa)) the chain is on the lumenal side. Positions 91–763 (TCVTEACIRV…MNPGQLCEVW (673 aa)) constitute a Peptidase M13 domain. 5 cysteine pairs are disulfide-bonded: cysteine 92–cysteine 97, cysteine 115–cysteine 748, cysteine 123–cysteine 708, cysteine 179–cysteine 428, and cysteine 637–cysteine 760. 7 N-linked (GlcNAc...) asparagine glycosylation sites follow: asparagine 159, asparagine 163, asparagine 204, asparagine 264, asparagine 309, asparagine 376, and asparagine 532. Residue histidine 600 participates in Zn(2+) binding. Glutamate 601 is a catalytic residue. Histidine 604 contributes to the Zn(2+) binding site. 2 N-linked (GlcNAc...) asparagine glycosylation sites follow: asparagine 625 and asparagine 633. Residue glutamate 660 coordinates Zn(2+). Aspartate 664 (proton donor) is an active-site residue.

The protein belongs to the peptidase M13 family. Requires Zn(2+) as cofactor.

Its subcellular location is the golgi apparatus membrane. It is found in the cytoplasmic vesicle. The protein localises to the secretory vesicle membrane. The catalysed reaction is Hydrolysis of the 21-Trp-|-Val-22 bond in big endothelin to form endothelin 1.. In terms of biological role, converts big endothelin-1 to endothelin-1. Also involved in the processing of various neuroendocrine peptides, including neurotensin, angiotensin I, substance P, proenkephalin-derived peptides, and prodynorphin-derived peptides. May play a role in amyloid-beta processing. This chain is Endothelin-converting enzyme 2, found in Mus musculus (Mouse).